The chain runs to 465 residues: Cysteine--tRNA ligase (465 aa).

Cys-27 contributes to the Zn(2+) binding site. The 'HIGH' region signature appears at 29–39 (PTVYNFFHIGN). Cys-207, His-232, and Glu-236 together coordinate Zn(2+). The 'KMSKS' region motif lies at 264-268 (KMSKS). An ATP-binding site is contributed by Lys-267.

Belongs to the class-I aminoacyl-tRNA synthetase family. Monomer. The cofactor is Zn(2+).

It localises to the cytoplasm. The enzyme catalyses tRNA(Cys) + L-cysteine + ATP = L-cysteinyl-tRNA(Cys) + AMP + diphosphate. This is Cysteine--tRNA ligase from Clostridium botulinum (strain 657 / Type Ba4).